The sequence spans 149 residues: Pleckstrin homology domain-containing family J member 1 (149 aa).

The PH domain maps to 15–108 (PAEMAAELGM…WMAALRQASY (94 aa)).

This Bos taurus (Bovine) protein is Pleckstrin homology domain-containing family J member 1 (PLEKHJ1).